We begin with the raw amino-acid sequence, 365 residues long: Phosphopantothenate--cysteine ligase CAB2 (365 aa).

The tract at residues 228–250 is disordered; the sequence is QSGDNGKMGANNDTEGTTRTTPD. Over residues 238 to 248 the composition is skewed to polar residues; sequence NNDTEGTTRTT.

The protein belongs to the PPC synthetase family. Homodimer.

The protein localises to the cytoplasm. It localises to the nucleus. The catalysed reaction is (R)-4'-phosphopantothenate + L-cysteine + CTP = N-[(R)-4-phosphopantothenoyl]-L-cysteine + CMP + diphosphate + H(+). The protein operates within cofactor biosynthesis; coenzyme A biosynthesis; CoA from (R)-pantothenate: step 2/5. Functionally, catalyzes the first step in the biosynthesis of coenzyme A from vitamin B5, where cysteine is conjugated to 4'-phosphopantothenate to form 4-phosphopantothenoylcysteine. The protein is Phosphopantothenate--cysteine ligase CAB2 (CAB2) of Saccharomyces cerevisiae (strain ATCC 204508 / S288c) (Baker's yeast).